A 509-amino-acid chain; its full sequence is Maturase K (509 aa).

It belongs to the intron maturase 2 family. MatK subfamily.

It is found in the plastid. Its subcellular location is the chloroplast. Its function is as follows. Usually encoded in the trnK tRNA gene intron. Probably assists in splicing its own and other chloroplast group II introns. The polypeptide is Maturase K (Metasequoia glyptostroboides (Dawn redwood)).